Consider the following 440-residue polypeptide: GTPase Der (440 aa).

EngA-type G domains follow at residues 3–168 (PIIA…GKMD) and 177–353 (LKLA…EEYT). GTP is bound by residues 9 to 16 (GRPNVGKS), 56 to 60 (DTGGL), 119 to 122 (NKID), 183 to 190 (GKPNAGKS), 230 to 234 (DTAGI), and 295 to 298 (NKWD). A KH-like domain is found at 354 to 438 (KRISTGLLNT…PIMISFENKS (85 aa)).

Belongs to the TRAFAC class TrmE-Era-EngA-EngB-Septin-like GTPase superfamily. EngA (Der) GTPase family. As to quaternary structure, associates with the 50S ribosomal subunit.

In terms of biological role, GTPase that plays an essential role in the late steps of ribosome biogenesis. The polypeptide is GTPase Der (Fusobacterium nucleatum subsp. nucleatum (strain ATCC 25586 / DSM 15643 / BCRC 10681 / CIP 101130 / JCM 8532 / KCTC 2640 / LMG 13131 / VPI 4355)).